A 422-amino-acid chain; its full sequence is Elongation factor 1-alpha (422 aa).

One can recognise a tr-type G domain in the interval 5-221 (KPHMNLAVIG…NNLKVPEKPS (217 aa)). Positions 14–21 (GHIDHGKS) are G1. 14-21 (GHIDHGKS) contacts GTP. Serine 21 contributes to the Mg(2+) binding site. The G2 stretch occupies residues 70 to 74 (GITID). The segment at 91–94 (DCPG) is G3. GTP is bound by residues 91 to 95 (DCPGH) and 146 to 149 (NKMD). Residues 146–149 (NKMD) are G4. The G5 stretch occupies residues 185–187 (SAF).

It belongs to the TRAFAC class translation factor GTPase superfamily. Classic translation factor GTPase family. EF-Tu/EF-1A subfamily.

It localises to the cytoplasm. The catalysed reaction is GTP + H2O = GDP + phosphate + H(+). In terms of biological role, GTP hydrolase that promotes the GTP-dependent binding of aminoacyl-tRNA to the A-site of ribosomes during protein biosynthesis. The sequence is that of Elongation factor 1-alpha from Methanosarcina barkeri (strain Fusaro / DSM 804).